A 214-amino-acid polypeptide reads, in one-letter code: Sugar fermentation stimulation protein homolog (214 aa).

Belongs to the SfsA family.

This chain is Sugar fermentation stimulation protein homolog, found in Aquifex aeolicus (strain VF5).